The chain runs to 190 residues: MDVGSKEVLMESPPDYTAVPGGRLLIPCCPVNIKRLLIVVVVVVLVVVVIVGALLMGLHMSQKHTEMVLEMSITGPEAQQRLALSERVGTTATFSIGSTGTVVYDYQRLLIAYKPAPGTCCYIMKMAPQNIPSLEALTRKLQNFQAKPQVPSSKLGQEQGHDAGSAFSGDLAFLGRTVSTLCGEVPLYYT.

The propeptide occupies 1 to 24 (MDVGSKEVLMESPPDYTAVPGGRL). 2 S-palmitoyl cysteine lipidation sites follow: Cys-28 and Cys-29. A propeptide spanning residues 59-190 (HMSQKHTEMV…LCGEVPLYYT (132 aa)) is cleaved from the precursor. Residues 94–190 (FSIGSTGTVV…LCGEVPLYYT (97 aa)) enclose the BRICHOS domain. A disulfide bridge links Cys-121 with Cys-182.

It is found in the secreted. The protein localises to the extracellular space. Its subcellular location is the surface film. In terms of biological role, pulmonary surfactant associated proteins promote alveolar stability by lowering the surface tension at the air-liquid interface in the peripheral air spaces. This Bos taurus (Bovine) protein is Surfactant protein C (SFTPC).